Consider the following 235-residue polypeptide: uncharacterized protein (235 aa).

Residues 2–235 enclose the ABC transporter domain; it reads IKLKNVTKTY…EEKLRGFDDR (234 aa). Residue 38 to 45 coordinates ATP; the sequence is GPSGSGKS.

This sequence belongs to the ABC transporter superfamily.

This is an uncharacterized protein from Methanocaldococcus jannaschii (strain ATCC 43067 / DSM 2661 / JAL-1 / JCM 10045 / NBRC 100440) (Methanococcus jannaschii).